The chain runs to 1768 residues: Callose synthase 11 (1768 aa).

Over Met1–Leu308 the chain is Cytoplasmic. A helical membrane pass occupies residues Trp309–Phe329. Residues Pro330 to Asp335 are Extracellular-facing. Residues Val336 to Val356 form a helical membrane-spanning segment. At Leu357–Thr370 the chain is on the cytoplasmic side. Residues Tyr371–Phe391 traverse the membrane as a helical segment. Residues Ser392–Lys421 are Extracellular-facing. A helical membrane pass occupies residues Val422–Ile442. At Arg443–Lys480 the chain is on the cytoplasmic side. A helical membrane pass occupies residues Tyr481–Ile501. Residues Arg502–Arg530 lie on the Extracellular side of the membrane. Residues Ile531 to Trp551 traverse the membrane as a helical segment. Residues Tyr552 to Thr1341 are Cytoplasmic-facing. A helical membrane pass occupies residues Thr1342–Gly1362. The Extracellular segment spans residues Arg1363–Gly1386. A helical membrane pass occupies residues Ala1387–Leu1407. At Glu1408 to Arg1413 the chain is on the cytoplasmic side. A helical membrane pass occupies residues Gly1414 to Tyr1434. The Extracellular segment spans residues Thr1435–His1481. The helical transmembrane segment at Phe1482–Ala1502 threads the bilayer. Residues Lys1503–Tyr1508 lie on the Cytoplasmic side of the membrane. The helical transmembrane segment at Ile1509–Phe1529 threads the bilayer. Topologically, residues Asn1530–Lys1583 are extracellular. Residues Leu1584 to Leu1604 form a helical membrane-spanning segment. Topologically, residues Arg1605–Ser1612 are cytoplasmic. The helical transmembrane segment at Ile1613–Thr1633 threads the bilayer. Over Ile1634–Arg1649 the chain is Extracellular. The chain crosses the membrane as a helical span at residues Phe1650–Thr1670. Residues Lys1671–Thr1673 are Cytoplasmic-facing. The helical transmembrane segment at Val1674–Ile1694 threads the bilayer. Residues Ala1695–Asp1719 are Extracellular-facing. A helical transmembrane segment spans residues Leu1720–Gln1740. The Cytoplasmic segment spans residues Asn1741–Thr1768.

Belongs to the glycosyltransferase 48 family. Ubiquitous.

It localises to the cell membrane. The enzyme catalyses [(1-&gt;3)-beta-D-glucosyl](n) + UDP-alpha-D-glucose = [(1-&gt;3)-beta-D-glucosyl](n+1) + UDP + H(+). Its function is as follows. Required the formation of the callose wall separating the tetraspores (interstitial wall), but not for the callose wall surrounding the pollen mother cells (peripheral wall). Functionally redudant to CALS12 (GSL5). During plant growth and development, callose is found as a transitory component of the cell plate in dividing cells, is a major component of pollen mother cell walls and pollen tubes, and is found as a structural component of plasmodesmatal canals. This is Callose synthase 11 (CALS11) from Arabidopsis thaliana (Mouse-ear cress).